Consider the following 652-residue polypeptide: DNA mismatch repair protein MutL (652 aa).

2 disordered regions span residues 357-377 and 425-457; these read LGANDRQGSHSSNTPTLNYPS and PDKGSSAQVQNTSGSDQASAQKHETTTLQNSTD. Residues 365–375 are compositionally biased toward polar residues; it reads SHSSNTPTLNY.

This sequence belongs to the DNA mismatch repair MutL/HexB family.

This protein is involved in the repair of mismatches in DNA. It is required for dam-dependent methyl-directed DNA mismatch repair. May act as a 'molecular matchmaker', a protein that promotes the formation of a stable complex between two or more DNA-binding proteins in an ATP-dependent manner without itself being part of a final effector complex. This chain is DNA mismatch repair protein MutL, found in Colwellia psychrerythraea (strain 34H / ATCC BAA-681) (Vibrio psychroerythus).